The chain runs to 391 residues: Multidrug resistance protein MdtL (391 aa).

Helical transmembrane passes span 4–24 (FLIC…MYLV), 42–62 (IAFS…GKVA), 69–89 (PVAI…SLAE), 93–113 (LFLA…VVAF), 131–151 (LLNG…HLIM), 158–178 (SLFW…LFIL), 203–222 (FFLS…LTFV), 245–265 (ALTA…LGIF), 269–289 (TLMI…AVSP), 293–313 (VSLF…GVAM), 331–351 (LGIA…VVGI), and 356–376 (MLIG…MFVA).

Belongs to the major facilitator superfamily. DHA1 family. MdtL (TC 2.A.1.2.22) subfamily.

The protein localises to the cell inner membrane. Confers resistance to chloramphenicol. This chain is Multidrug resistance protein MdtL, found in Escherichia coli O45:K1 (strain S88 / ExPEC).